We begin with the raw amino-acid sequence, 637 residues long: CD2-associated protein (637 aa).

One can recognise an SH3 1; truncated domain in the interval 1–59 (MVDYIVEYDYDAVHDDELTIRVGEIIRNVKKLQEEGWLEGELNGRRGMFPDNFVKEIKR). The tract at residues 1–175 (MVDYIVEYDY…ESTEDGETHN (175 aa)) is interaction with ANLN and localization to the midbody. Lysine 58 participates in a covalent cross-link: Glycyl lysine isopeptide (Lys-Gly) (interchain with G-Cter in SUMO2). Phosphoserine is present on residues serine 80 and serine 86. An SH3 2 domain is found at 108 to 167 (TKKRQCKVLFDYSPQNEDELELIVGDVIDVIEEVEEGWWSGTLNNKLGLFPSNFVKELES). Residues 166–177 (ESTEDGETHNAQ) are compositionally biased toward basic and acidic residues. Residues 166–209 (ESTEDGETHNAQEESEVPLTGPTSPLPSPGNGSEPAPGSVAQPK) are disordered. Serine 224 is modified (phosphoserine). The interval 226 to 254 (KLRTRTSSSETEEKKTEKPLILQPLGSRT) is disordered. The region spanning 269-330 (KAKEYCRTLF…PDNFAVQISE (62 aa)) is the SH3 3 domain. The interval 333-455 (KDFPKPKKPP…KLDPEQLPVR (123 aa)) is disordered. 3 short sequence motifs (SH3-binding) span residues 336–352 (PKPK…APKP), 378–397 (KPSK…APTK), and 410–422 (PKRP…PPPP). A compositionally biased stretch (pro residues) spans 341 to 351 (PPPPAKGPAPK). A compositionally biased stretch (basic and acidic residues) spans 356–379 (AAEKKAFPLKAEEKDEKSLLEQKP). The segment covering 437 to 449 (IDTEPVSKPKLDP) has biased composition (basic and acidic residues). Serine 458, serine 469, serine 510, and serine 514 each carry phosphoserine. A disordered region spans residues 488–555 (HLTANRPKMP…SLSTPSSASK (68 aa)). Positions 517–539 (KTLKLPKEDDSGNLKPLEFKKDA) are enriched in basic and acidic residues. Residue lysine 523 forms a Glycyl lysine isopeptide (Lys-Gly) (interchain with G-Cter in SUMO2) linkage. The span at 540-555 (SYSSKSSLSTPSSASK) shows a compositional bias: low complexity. Threonine 563 is modified (phosphothreonine). The stretch at 578 to 636 (RNSVDELRAQIIELLCIVDALKKDHGKELEKLRKELEEEKAMRSNLEVEIAKLKKAVLL) forms a coiled coil. At serine 580 the chain carries Phosphoserine.

In terms of assembly, homodimer. Interacts with F-actin, PKD2, NPHS1 and NPHS2. Interacts with WTIP. Interacts with DDN; interaction is direct. Interacts (via SH3 2 domain) with CBL (via phosphorylated C-terminus). Interacts with BCAR1/p130Cas (via SH3 domain). Interacts with MVB12A and ARHGAP17. Interacts with ANLN, CD2 and CBLB. Interacts with PDCD6IP and TSG101. Interacts with RIN3. Interacts directly with RET (inactive) and CBLC; upon RET activation by GDNF suggested to dissociate from RET as CBLC:CD2AP complex. Interacts with CGNL1 and SH3BP1; probably part of a complex at cell junctions. Interacts with CAPZA1. Phosphorylated on tyrosine residues; probably by c-Abl, Fyn and c-Src. Expressed in podocytes (at protein level).

The protein resides in the cytoplasm. It is found in the cytoskeleton. The protein localises to the cell projection. It localises to the ruffle. Its subcellular location is the cell junction. Its function is as follows. Seems to act as an adapter protein between membrane proteins and the actin cytoskeleton. In collaboration with CBLC, modulates the rate of RET turnover and may act as regulatory checkpoint that limits the potency of GDNF on neuronal survival. Controls CBLC function, converting it from an inhibitor to a promoter of RET degradation. May play a role in receptor clustering and cytoskeletal polarity in the junction between T-cell and antigen-presenting cell. May anchor the podocyte slit diaphragm to the actin cytoskeleton in renal glomerolus. Also required for cytokinesis. Plays a role in epithelial cell junctions formation. The protein is CD2-associated protein (Cd2ap) of Mus musculus (Mouse).